The primary structure comprises 166 residues: Lymphocyte antigen 6G6e (166 aa).

An N-terminal signal peptide occupies residues 1–18; the sequence is MGPSSAFLGVLFLSGTLG. The 124-residue stretch at 28 to 151 folds into the UPAR/Ly6 domain; the sequence is LRCYTCSFAK…PPPNLPLMTL (124 aa). 4 disulfide bridges follow: C30-C52, C33-C39, C110-C129, and C130-C135.

In terms of assembly, interacts with CHRNA4. In terms of processing, O-glycosylated. Contains sialic acid residues.

Its subcellular location is the cell surface. The protein localises to the cell membrane. It localises to the cell projection. Its function is as follows. Believed to act as a modulator of nicotinic acetylcholine receptors (nAChRs) activity. In vitro potentiates alpha-3:beta-4-containing nAChRs maximum response by increasing peak current and slowing down receptor desensitization; the activity is dependent on its cell surface localization. The polypeptide is Lymphocyte antigen 6G6e (Ly6g6e) (Mus musculus (Mouse)).